The chain runs to 155 residues: Small ribosomal subunit protein uS7 (155 aa).

Belongs to the universal ribosomal protein uS7 family. In terms of assembly, part of the 30S ribosomal subunit. Contacts proteins S9 and S11.

In terms of biological role, one of the primary rRNA binding proteins, it binds directly to 16S rRNA where it nucleates assembly of the head domain of the 30S subunit. Is located at the subunit interface close to the decoding center, probably blocks exit of the E-site tRNA. This is Small ribosomal subunit protein uS7 from Fervidobacterium nodosum (strain ATCC 35602 / DSM 5306 / Rt17-B1).